A 284-amino-acid polypeptide reads, in one-letter code: 2-dehydro-3-deoxyphosphooctonate aldolase (284 aa).

The protein belongs to the KdsA family.

The protein resides in the cytoplasm. The catalysed reaction is D-arabinose 5-phosphate + phosphoenolpyruvate + H2O = 3-deoxy-alpha-D-manno-2-octulosonate-8-phosphate + phosphate. The protein operates within carbohydrate biosynthesis; 3-deoxy-D-manno-octulosonate biosynthesis; 3-deoxy-D-manno-octulosonate from D-ribulose 5-phosphate: step 2/3. Its pathway is bacterial outer membrane biogenesis; lipopolysaccharide biosynthesis. The sequence is that of 2-dehydro-3-deoxyphosphooctonate aldolase from Klebsiella pneumoniae subsp. pneumoniae (strain ATCC 700721 / MGH 78578).